The primary structure comprises 308 residues: Ribosomal RNA large subunit methyltransferase F (308 aa).

It belongs to the methyltransferase superfamily. METTL16/RlmF family.

The protein localises to the cytoplasm. The enzyme catalyses adenosine(1618) in 23S rRNA + S-adenosyl-L-methionine = N(6)-methyladenosine(1618) in 23S rRNA + S-adenosyl-L-homocysteine + H(+). Its function is as follows. Specifically methylates the adenine in position 1618 of 23S rRNA. This is Ribosomal RNA large subunit methyltransferase F from Escherichia coli O127:H6 (strain E2348/69 / EPEC).